Reading from the N-terminus, the 518-residue chain is Serine--tRNA ligase, mitochondrial (518 aa).

Residues 1-34 (MAASMARLWWPFLARQGLRSRGRCVCSQNPRRSF) constitute a mitochondrion transit peptide. Residue Lys-110 is modified to N6-acetyllysine. Lys-195 carries the post-translational modification N6-succinyllysine. Residue 299 to 301 (TAE) participates in L-serine binding. 330 to 332 (RAE) lines the ATP pocket. Position 337 is an N6-succinyllysine (Lys-337). Val-345 serves as a coordination point for ATP. L-serine is bound at residue Glu-352. 418–421 (EVTS) contributes to the ATP binding site. Residue Thr-453 coordinates L-serine. Residues 497-518 (PLQYIGPNQPQKPRLPGQSATR) are disordered.

It belongs to the class-II aminoacyl-tRNA synthetase family. Type-1 seryl-tRNA synthetase subfamily. As to quaternary structure, homodimer. The tRNA molecule probably binds across the dimer. As to expression, ubiquitous.

Its subcellular location is the mitochondrion matrix. The catalysed reaction is tRNA(Ser) + L-serine + ATP = L-seryl-tRNA(Ser) + AMP + diphosphate + H(+). The enzyme catalyses tRNA(Sec) + L-serine + ATP = L-seryl-tRNA(Sec) + AMP + diphosphate + H(+). It functions in the pathway aminoacyl-tRNA biosynthesis; selenocysteinyl-tRNA(Sec) biosynthesis; L-seryl-tRNA(Sec) from L-serine and tRNA(Sec): step 1/1. Catalyzes the attachment of serine to tRNA(Ser). Is also probably able to aminoacylate tRNA(Sec) with serine, to form the misacylated tRNA L-seryl-tRNA(Sec), which will be further converted into selenocysteinyl-tRNA(Sec). The sequence is that of Serine--tRNA ligase, mitochondrial (Sars2) from Mus musculus (Mouse).